A 398-amino-acid chain; its full sequence is Flavin-containing monooxygenase ustF1 (398 aa).

Residues 1–22 form the signal peptide; the sequence is MTVSQVRRVAVIGAGISGVVST. 13–18 contacts FAD; it reads GAGISG. Asparagine 53, asparagine 57, asparagine 119, and asparagine 126 each carry an N-linked (GlcNAc...) asparagine glycan. Residue 194–199 participates in NADP(+) binding; that stretch reads GGGVSS. N-linked (GlcNAc...) asparagine glycosylation is found at asparagine 236, asparagine 243, and asparagine 271.

The protein belongs to the FMO family.

It functions in the pathway mycotoxin biosynthesis. Flavin-containing monooxygenase; part of the gene cluster that mediates the biosynthesis of the secondary metabolite ustiloxin B, an antimitotic tetrapeptide. First, ustA is processed by the subtilisin-like endoprotease Kex2 that is outside the ustiloxin B gene cluster, at the C-terminal side of Arg-Lys, after transfer to Golgi apparatus through the endoplasmic reticulum (ER). Cleavage by KEX2 generates 16 peptides YAIG-I to YAIG-XVI. To process the precursor peptide further, at least two peptidases are necessary to cleave the N-terminal and C-terminal sides of the Tyr-Ala-Ile-Gly core peptide which serves as backbone for the synthesis of ustiloxin B, through cyclization and modification of the tyrosine with a non-protein coding amino acid, norvaline. One of the two peptidases must be the serine peptidase ustP; and the other pepdidase is probably ustH. Macrocyclization of the core peptide derived from ustA requires the tyrosinase ustQ, as well as the homologous oxidases ustYa and ustYb, and leads to the production of the first cyclization product N-desmethylustiloxin F. For the formation of N-desmethylustiloxin F, three oxidation steps are required, hydroxylation at the benzylic position, hydroxylation at either the aromatic ring of Tyr or beta-position of Ile, and oxidative cyclization. UstQ may catalyze the oxidation of a phenol moiety, whereas the ustYa and ustYb are most likely responsible for the remaining two-step oxidations. N-desmethylustiloxin F is then methylated by ustM to yield ustiloxin F which in turn substrate of the cytochrome P450 monooxygenase ustC which catalyzes the formation of S-deoxyustiloxin H. The flavoprotein monooxygenases ustF1 and ustF2 then participate in the modification of the side chain of S-deoxyustiloxin H, leading to the synthesis of an oxime intermediate, via ustiloxin H. Finally, carboxylative dehydration performed by the cysteine desulfurase-like protein ustD yields ustiloxin B. The chain is Flavin-containing monooxygenase ustF1 from Aspergillus flavus (strain ATCC 200026 / FGSC A1120 / IAM 13836 / NRRL 3357 / JCM 12722 / SRRC 167).